A 659-amino-acid polypeptide reads, in one-letter code: Homeobox protein slou (659 aa).

A compositionally biased stretch (polar residues) spans 1-21 (MVMLQSPAQKASDSASAQNTA). 6 disordered regions span residues 1–63 (MVML…PAAK), 94–152 (MSSE…SFSS), 198–298 (AQQH…AAPS), 316–349 (TQAS…PSGR), 376–440 (QIAA…DRDA), and 455–548 (PNKF…PRRA). 3 stretches are compositionally biased toward low complexity: residues 27–51 (SPNS…SVVS), 95–108 (SSES…LSPL), and 120–135 (HNNN…NSNT). A compositionally biased stretch (polar residues) spans 136–152 (RRSQSPPASVGSVSFSS). Residues 201 to 232 (HMHHHQHQHHQHPAHPHSHQHPHPHPHPHPHP) show a composition bias toward basic residues. A run of 7 repeats spans residues 221 to 222 (HP), 223 to 224 (HP), 225 to 226 (HP), 227 to 228 (HP), 229 to 230 (HP), 231 to 232 (HP), and 233 to 234 (HP). The interval 221 to 234 (HPHPHPHPHPHPHP) is 7 X 2 AA tandem repeats of H-P. Pro residues-rich tracts occupy residues 250–263 (PPSP…PPTS) and 275–286 (PIAPPQNPPHSS). 2 stretches are compositionally biased toward low complexity: residues 287–298 (QPPQQQQVAAPS) and 316–347 (TQAS…GSPS). Over residues 388–401 (SEELNVDGNDEDSN) the composition is skewed to acidic residues. The span at 417–435 (RSVNSSAAANPSSASTSAS) shows a compositional bias: low complexity. Acidic residues-rich tracts occupy residues 478-492 (RDEE…DQSE) and 500-519 (NDMD…DPSS). Residues 528–543 (SRNGDGKSGGGGGGGS) are compositionally biased toward gly residues. The segment at residues 545–604 (PRRARTAFTYEQLVSLENKFKTTRYLSVCERLNLALSLSLTETQVKIWFQNRRTKWKKQN) is a DNA-binding region (homeobox).

The protein belongs to the NK-1 homeobox family. As to expression, mesodermal precursor cells of distinct muscles during embryogenesis, a subset of neuronal cells of the CNS and their precursors and also in cells of a small region of the midgut.

The protein localises to the nucleus. May play a role in specifying the identity of particular somatic muscles and neurons of the CNS. In Drosophila melanogaster (Fruit fly), this protein is Homeobox protein slou (slou).